A 269-amino-acid chain; its full sequence is UPF0328 protein ECU03_0020 (269 aa).

This sequence belongs to the UPF0328 family.

This chain is UPF0328 protein ECU03_0020, found in Encephalitozoon cuniculi (strain GB-M1) (Microsporidian parasite).